Consider the following 290-residue polypeptide: Cbb3-type cytochrome c oxidase subunit FixP (290 aa).

A helical transmembrane segment spans residues 33–53 (WWVITFYITIVWAIGYWIVYP). Cytochrome c domains lie at 109 to 198 (LARA…RSLS) and 206 to 287 (YDAA…HSLG). Heme c is bound by residues cysteine 122, cysteine 125, histidine 126, methionine 173, cysteine 219, cysteine 222, histidine 223, and methionine 264.

The protein belongs to the CcoP / FixP family. In terms of assembly, component of the cbb3-type cytochrome c oxidase at least composed of FixN, FixO, FixQ and FixP. It depends on heme c as a cofactor.

It is found in the cell inner membrane. Its pathway is energy metabolism; oxidative phosphorylation. Functionally, C-type cytochrome. Part of the cbb3-type cytochrome c oxidase complex. FixP subunit is required for transferring electrons from donor cytochrome c via its heme groups to FixO subunit. From there, electrons are shuttled to the catalytic binuclear center of FixN subunit where oxygen reduction takes place. The complex also functions as a proton pump. In Bradyrhizobium sp. (strain ORS 278), this protein is Cbb3-type cytochrome c oxidase subunit FixP.